The following is a 366-amino-acid chain: MIPRERILSVLSKYDESDVKIGTICSHSSLQIFNGARREGLRSVGIVLRENKPYYESFPRASPDIFIEVDSYGDLLSEETQEELISENVIMIPHGSFVEYVGSENILERFRVPMFGNRLTLYWEGDRRRQRKWLEDAGVPTPRIYRSPEDIDRPVIVKLHGAKGGKGYFKASSPEEFYEKFSELKERGLVGSLEDVVIEEFIVGVRFYPHFFFSPIEGENIADLEGGRLELLGIDRRLEVIDEIHRGLPDLMEDFMDYTVTGNIPVIVREKYLVDLLRDAVKIISSSRRLFYPGLIGPFCMEMIYNPSRGFITFEVSARIVAGTNLYTDGSPYSYYYYDEPMSMGRRIAREIKEAVKSGSLHKIIY.

5-amino-1-(5-phospho-beta-D-ribosyl)imidazole-4-carboxamide contacts are provided by His27 and Ser96. Positions 131–357 (RKWLEDAGVP…IAREIKEAVK (227 aa)) constitute an ATP-grasp domain. ATP-binding positions include 154-208 (PVIV…VRFY) and Glu239. A 5-amino-1-(5-phospho-beta-D-ribosyl)imidazole-4-carboxamide-binding site is contributed by Asn263. 2 residues coordinate Mg(2+): Glu302 and Glu315.

Belongs to the phosphohexose mutase family. Mg(2+) is required as a cofactor. It depends on Mn(2+) as a cofactor.

It catalyses the reaction 5-amino-1-(5-phospho-beta-D-ribosyl)imidazole-4-carboxamide + formate + ATP = 5-formamido-1-(5-phospho-D-ribosyl)imidazole-4-carboxamide + ADP + phosphate. The protein operates within purine metabolism; IMP biosynthesis via de novo pathway; 5-formamido-1-(5-phospho-D-ribosyl)imidazole-4-carboxamide from 5-amino-1-(5-phospho-D-ribosyl)imidazole-4-carboxamide (formate route): step 1/1. Catalyzes the ATP- and formate-dependent formylation of 5-aminoimidazole-4-carboxamide-1-beta-d-ribofuranosyl 5'-monophosphate (AICAR) to 5-formaminoimidazole-4-carboxamide-1-beta-d-ribofuranosyl 5'-monophosphate (FAICAR) in the absence of folates. This Korarchaeum cryptofilum (strain OPF8) protein is 5-formaminoimidazole-4-carboxamide-1-(beta)-D-ribofuranosyl 5'-monophosphate synthetase.